We begin with the raw amino-acid sequence, 208 residues long: Large ribosomal subunit protein uL3 (208 aa).

At Q149 the chain carries N5-methylglutamine.

It belongs to the universal ribosomal protein uL3 family. As to quaternary structure, part of the 50S ribosomal subunit. Forms a cluster with proteins L14 and L19. In terms of processing, methylated by PrmB.

Functionally, one of the primary rRNA binding proteins, it binds directly near the 3'-end of the 23S rRNA, where it nucleates assembly of the 50S subunit. This is Large ribosomal subunit protein uL3 from Haemophilus influenzae (strain 86-028NP).